The primary structure comprises 97 residues: Small ribosomal subunit protein bS20 (97 aa).

Belongs to the bacterial ribosomal protein bS20 family.

In terms of biological role, binds directly to 16S ribosomal RNA. The protein is Small ribosomal subunit protein bS20 of Prochlorococcus marinus subsp. pastoris (strain CCMP1986 / NIES-2087 / MED4).